The following is a 495-amino-acid chain: Adenosylhomocysteinase (495 aa).

3 residues coordinate substrate: T71, D156, and E218. NAD(+) is bound at residue 219 to 221 (TTT). Substrate-binding residues include K248 and D252. NAD(+) contacts are provided by residues N253, 282–287 (GYGDVG), E305, N340, 361–363 (IGH), and N409.

This sequence belongs to the adenosylhomocysteinase family. The cofactor is NAD(+).

It is found in the cytoplasm. It carries out the reaction S-adenosyl-L-homocysteine + H2O = L-homocysteine + adenosine. It participates in amino-acid biosynthesis; L-homocysteine biosynthesis; L-homocysteine from S-adenosyl-L-homocysteine: step 1/1. May play a key role in the regulation of the intracellular concentration of adenosylhomocysteine. This chain is Adenosylhomocysteinase, found in Mycobacterium tuberculosis (strain ATCC 25177 / H37Ra).